Here is a 262-residue protein sequence, read N- to C-terminus: uncharacterized protein (262 aa).

The next 6 helical transmembrane spans lie at 7–27 (LAVA…LAHM), 58–78 (DTLG…IVFG), 114–134 (FLAF…VLGG), 140–160 (GGFQ…IAFG), 179–199 (GALG…YYLF), and 216–236 (IITA…VLAG).

Its subcellular location is the cell membrane. This is an uncharacterized protein from Methanocaldococcus jannaschii (strain ATCC 43067 / DSM 2661 / JAL-1 / JCM 10045 / NBRC 100440) (Methanococcus jannaschii).